The following is a 60-amino-acid chain: Bacteriochlorophyll c-binding protein (60 aa).

N-formylmethionine is present on methionine 1. Residue histidine 25 coordinates a bacteriochlorophyll c.

It belongs to the BChl C/E-binding protein family.

The protein resides in the chlorosome. The protein localises to the chlorosome envelope. In terms of biological role, component of the photosynthetic apparatus. The light harvesting B740 complex binds bacteriochlorophyll c. This Pelodictyon luteolum protein is Bacteriochlorophyll c-binding protein (csmA).